Here is a 433-residue protein sequence, read N- to C-terminus: Cyclin-dependent kinase F-3 (433 aa).

Positions Tyr-4–Phe-283 constitute a Protein kinase domain. Residues Ile-10–Val-18 and Lys-33 contribute to the ATP site. The active-site Proton acceptor is Asp-125. Residue Ser-151 is modified to Phosphoserine. A Phosphothreonine modification is found at Thr-156.

It belongs to the protein kinase superfamily. CMGC Ser/Thr protein kinase family. CDC2/CDKX subfamily.

The enzyme catalyses L-seryl-[protein] + ATP = O-phospho-L-seryl-[protein] + ADP + H(+). It catalyses the reaction L-threonyl-[protein] + ATP = O-phospho-L-threonyl-[protein] + ADP + H(+). The catalysed reaction is [DNA-directed RNA polymerase] + ATP = phospho-[DNA-directed RNA polymerase] + ADP + H(+). The chain is Cyclin-dependent kinase F-3 (CDKF-3) from Oryza sativa subsp. japonica (Rice).